Here is a 496-residue protein sequence, read N- to C-terminus: Lysine--tRNA ligase (496 aa).

The Mg(2+) site is built by E409 and E416.

The protein belongs to the class-II aminoacyl-tRNA synthetase family. In terms of assembly, homodimer. Requires Mg(2+) as cofactor.

It localises to the cytoplasm. It carries out the reaction tRNA(Lys) + L-lysine + ATP = L-lysyl-tRNA(Lys) + AMP + diphosphate. This chain is Lysine--tRNA ligase, found in Streptococcus thermophilus (strain ATCC BAA-491 / LMD-9).